Reading from the N-terminus, the 628-residue chain is tRNA uridine 5-carboxymethylaminomethyl modification enzyme MnmG (628 aa).

Residue 13-18 (GAGHAG) coordinates FAD. 273–287 (GPRYCPSIEDKIVRF) provides a ligand contact to NAD(+).

Belongs to the MnmG family. Homodimer. Heterotetramer of two MnmE and two MnmG subunits. It depends on FAD as a cofactor.

The protein localises to the cytoplasm. Its function is as follows. NAD-binding protein involved in the addition of a carboxymethylaminomethyl (cmnm) group at the wobble position (U34) of certain tRNAs, forming tRNA-cmnm(5)s(2)U34. In Buchnera aphidicola subsp. Acyrthosiphon pisum (strain Tuc7), this protein is tRNA uridine 5-carboxymethylaminomethyl modification enzyme MnmG.